The following is a 479-amino-acid chain: Ribosomal RNA small subunit methyltransferase F (479 aa).

Residues 125 to 131 (AAAPGSK), glutamate 149, aspartate 176, and aspartate 194 each bind S-adenosyl-L-methionine. The active-site Nucleophile is the cysteine 247.

Belongs to the class I-like SAM-binding methyltransferase superfamily. RsmB/NOP family.

It is found in the cytoplasm. The catalysed reaction is cytidine(1407) in 16S rRNA + S-adenosyl-L-methionine = 5-methylcytidine(1407) in 16S rRNA + S-adenosyl-L-homocysteine + H(+). Specifically methylates the cytosine at position 1407 (m5C1407) of 16S rRNA. The sequence is that of Ribosomal RNA small subunit methyltransferase F from Salmonella schwarzengrund (strain CVM19633).